Consider the following 492-residue polypeptide: Glutamyl-tRNA(Gln) amidotransferase subunit A (492 aa).

Residues Lys-78 and Ser-158 each act as charge relay system in the active site. The Acyl-ester intermediate role is filled by Ser-182.

Belongs to the amidase family. GatA subfamily. Heterotrimer of A, B and C subunits.

The catalysed reaction is L-glutamyl-tRNA(Gln) + L-glutamine + ATP + H2O = L-glutaminyl-tRNA(Gln) + L-glutamate + ADP + phosphate + H(+). Functionally, allows the formation of correctly charged Gln-tRNA(Gln) through the transamidation of misacylated Glu-tRNA(Gln) in organisms which lack glutaminyl-tRNA synthetase. The reaction takes place in the presence of glutamine and ATP through an activated gamma-phospho-Glu-tRNA(Gln). This Rhodopseudomonas palustris (strain ATCC BAA-98 / CGA009) protein is Glutamyl-tRNA(Gln) amidotransferase subunit A.